We begin with the raw amino-acid sequence, 224 residues long: Urease accessory protein UreF (224 aa).

The protein belongs to the UreF family. As to quaternary structure, ureD, UreF and UreG form a complex that acts as a GTP-hydrolysis-dependent molecular chaperone, activating the urease apoprotein by helping to assemble the nickel containing metallocenter of UreC. The UreE protein probably delivers the nickel.

It localises to the cytoplasm. In terms of biological role, required for maturation of urease via the functional incorporation of the urease nickel metallocenter. In Citrobacter koseri (strain ATCC BAA-895 / CDC 4225-83 / SGSC4696), this protein is Urease accessory protein UreF.